A 162-amino-acid polypeptide reads, in one-letter code: Ribosome maturation factor RimP (162 aa).

The protein belongs to the RimP family.

The protein localises to the cytoplasm. Functionally, required for maturation of 30S ribosomal subunits. This Ralstonia nicotianae (strain ATCC BAA-1114 / GMI1000) (Ralstonia solanacearum) protein is Ribosome maturation factor RimP.